The chain runs to 232 residues: Phosphatidylserine decarboxylase proenzyme (232 aa).

The active-site Schiff-base intermediate with substrate; via pyruvic acid is the Ser-190. Ser-190 carries the pyruvic acid (Ser); by autocatalysis modification.

Belongs to the phosphatidylserine decarboxylase family. PSD-A subfamily. As to quaternary structure, heterodimer of a large membrane-associated beta subunit and a small pyruvoyl-containing alpha subunit. It depends on pyruvate as a cofactor. In terms of processing, is synthesized initially as an inactive proenzyme. Formation of the active enzyme involves a self-maturation process in which the active site pyruvoyl group is generated from an internal serine residue via an autocatalytic post-translational modification. Two non-identical subunits are generated from the proenzyme in this reaction, and the pyruvate is formed at the N-terminus of the alpha chain, which is derived from the carboxyl end of the proenzyme. The post-translation cleavage follows an unusual pathway, termed non-hydrolytic serinolysis, in which the side chain hydroxyl group of the serine supplies its oxygen atom to form the C-terminus of the beta chain, while the remainder of the serine residue undergoes an oxidative deamination to produce ammonia and the pyruvoyl prosthetic group on the alpha chain.

The protein localises to the cell membrane. It carries out the reaction a 1,2-diacyl-sn-glycero-3-phospho-L-serine + H(+) = a 1,2-diacyl-sn-glycero-3-phosphoethanolamine + CO2. The protein operates within phospholipid metabolism; phosphatidylethanolamine biosynthesis; phosphatidylethanolamine from CDP-diacylglycerol: step 2/2. In terms of biological role, catalyzes the formation of phosphatidylethanolamine (PtdEtn) from phosphatidylserine (PtdSer). This chain is Phosphatidylserine decarboxylase proenzyme, found in Beijerinckia indica subsp. indica (strain ATCC 9039 / DSM 1715 / NCIMB 8712).